The chain runs to 279 residues: Tryptophan synthase alpha chain (279 aa).

Active-site proton acceptor residues include glutamate 50 and aspartate 61.

The protein belongs to the TrpA family. In terms of assembly, tetramer of two alpha and two beta chains.

It catalyses the reaction (1S,2R)-1-C-(indol-3-yl)glycerol 3-phosphate + L-serine = D-glyceraldehyde 3-phosphate + L-tryptophan + H2O. The protein operates within amino-acid biosynthesis; L-tryptophan biosynthesis; L-tryptophan from chorismate: step 5/5. The alpha subunit is responsible for the aldol cleavage of indoleglycerol phosphate to indole and glyceraldehyde 3-phosphate. In Rhizobium johnstonii (strain DSM 114642 / LMG 32736 / 3841) (Rhizobium leguminosarum bv. viciae), this protein is Tryptophan synthase alpha chain.